The chain runs to 1877 residues: Proprotein convertase subtilisin/kexin type 5 (1877 aa).

The first 34 residues, methionine 1 to threonine 34, serve as a signal peptide directing secretion. Residues arginine 35–arginine 116 constitute a propeptide that is removed on maturation. Residues aspartate 117–threonine 1768 are Extracellular-facing. The region spanning methionine 136–valine 455 is the Peptidase S8 domain. Active-site charge relay system residues include aspartate 173 and histidine 214. 2 N-linked (GlcNAc...) asparagine glycosylation sites follow: asparagine 227 and asparagine 383. Serine 388 serves as the catalytic Charge relay system. The region spanning threonine 463–glutamine 603 is the P/Homo B domain. The short motif at arginine 521–aspartate 523 is the Cell attachment site element. 22 FU repeats span residues glutamate 632–histidine 682, lysine 685–glutamate 732, lysine 736–phenylalanine 779, glycine 781–leucine 826, tyrosine 834–isoleucine 881, glutamine 884–glutamate 929, lysine 931–proline 981, glycine 984–glutamine 1030, tyrosine 1034–glycine 1079, lysine 1081–glycine 1123, leucine 1127–proline 1168, threonine 1206–proline 1248, serine 1252–alanine 1299, aspartate 1301–alanine 1345, glutamate 1347–proline 1390, methionine 1392–lysine 1438, asparagine 1442–tryptophan 1487, serine 1491–threonine 1536, serine 1540–glycine 1585, serine 1589–alanine 1636, alanine 1640–arginine 1685, and asparagine 1691–arginine 1738. The segment at cysteine 638–cysteine 1753 is CRM (Cys-rich motif). An N-linked (GlcNAc...) asparagine glycan is attached at asparagine 667. N-linked (GlcNAc...) asparagine glycans are attached at residues asparagine 754, asparagine 804, and asparagine 854. 2 N-linked (GlcNAc...) asparagine glycosylation sites follow: asparagine 951 and asparagine 1016. N-linked (GlcNAc...) asparagine glycosylation occurs at asparagine 1220. An N-linked (GlcNAc...) asparagine glycan is attached at asparagine 1317. Asparagine 1523 carries an N-linked (GlcNAc...) asparagine glycan. Residues asparagine 1711 and asparagine 1733 are each glycosylated (N-linked (GlcNAc...) asparagine). The chain crosses the membrane as a helical span at residues alanine 1769–tryptophan 1789. Over arginine 1790 to glutamine 1877 the chain is Cytoplasmic. AC stretches follow at residues valine 1825–methionine 1844 and tyrosine 1856–glutamine 1877.

The protein belongs to the peptidase S8 family. In terms of tissue distribution, PC5A is expressed in most tissues but is most abundant in the intestine and adrenals. PC5B is expressed in the intestine, adrenals and lung but not in the brain.

The protein resides in the secreted. It is found in the endomembrane system. Its function is as follows. Serine endoprotease that processes various proproteins by cleavage at paired basic amino acids, recognizing the RXXX[KR]R consensus motif. Likely functions in the constitutive and regulated secretory pathways. Plays an essential role in pregnancy establishment by proteolytic activation of a number of important factors such as BMP2, CALD1 and alpha-integrins. May be responsible for the maturation of gastrointestinal peptides. May be involved in the cellular proliferation of adrenal cortex via the activation of growth factors. The polypeptide is Proprotein convertase subtilisin/kexin type 5 (Pcsk5) (Mus musculus (Mouse)).